Consider the following 98-residue polypeptide: MSWAGSGRRQELPEDWELNYRLPVLSAANWLCQINGPGCVRAATDVDHIKRGNDHSRSNLQAACHVCHGKKSAAEGVARRRELRARRKRPPERHPGRR.

One can recognise an HNH domain in the interval 38–73 (GCVRAATDVDHIKRGNDHSRSNLQAACHVCHGKKSA). Residues 75 to 98 (EGVARRRELRARRKRPPERHPGRR) form a disordered region. Residues 81 to 98 (RELRARRKRPPERHPGRR) show a composition bias toward basic residues.

This Mycobacterium (Mycobacteriophage L5) protein is Gene 4 protein (4).